The primary structure comprises 762 residues: 5-methyltetrahydropteroyltriglutamate--homocysteine methyltransferase (762 aa).

5-methyltetrahydropteroyltri-L-glutamate-binding positions include 16-19 (RELK) and lysine 118. Residues 439-441 (IGS) and glutamate 492 each bind L-homocysteine. L-methionine contacts are provided by residues 439–441 (IGS) and glutamate 492. 5-methyltetrahydropteroyltri-L-glutamate-binding positions include 523-524 (RC) and tryptophan 569. Residue aspartate 607 coordinates L-homocysteine. Aspartate 607 is an L-methionine binding site. Glutamate 613 contacts 5-methyltetrahydropteroyltri-L-glutamate. Residues histidine 649, cysteine 651, and glutamate 673 each coordinate Zn(2+). Catalysis depends on histidine 702, which acts as the Proton donor. Cysteine 734 contacts Zn(2+).

The protein belongs to the vitamin-B12 independent methionine synthase family. The cofactor is Zn(2+).

It carries out the reaction 5-methyltetrahydropteroyltri-L-glutamate + L-homocysteine = tetrahydropteroyltri-L-glutamate + L-methionine. It functions in the pathway amino-acid biosynthesis; L-methionine biosynthesis via de novo pathway; L-methionine from L-homocysteine (MetE route): step 1/1. In terms of biological role, catalyzes the transfer of a methyl group from 5-methyltetrahydrofolate to homocysteine resulting in methionine formation. In Pseudomonas entomophila (strain L48), this protein is 5-methyltetrahydropteroyltriglutamate--homocysteine methyltransferase.